We begin with the raw amino-acid sequence, 178 residues long: Large ribosomal subunit protein uL16 (178 aa).

Belongs to the universal ribosomal protein uL16 family.

The chain is Large ribosomal subunit protein uL16 from Saccharolobus islandicus (strain Y.N.15.51 / Yellowstone #2) (Sulfolobus islandicus).